Reading from the N-terminus, the 120-residue chain is NAD(P)H-quinone oxidoreductase subunit 3, chloroplastic (120 aa).

The next 3 membrane-spanning stretches (helical) occupy residues 10–30 (FWFF…TSKL), 64–84 (MFAL…PWAM), and 89–109 (LGVY…IGLV).

Belongs to the complex I subunit 3 family. NDH is composed of at least 16 different subunits, 5 of which are encoded in the nucleus.

The protein localises to the plastid. The protein resides in the chloroplast thylakoid membrane. It catalyses the reaction a plastoquinone + NADH + (n+1) H(+)(in) = a plastoquinol + NAD(+) + n H(+)(out). It carries out the reaction a plastoquinone + NADPH + (n+1) H(+)(in) = a plastoquinol + NADP(+) + n H(+)(out). Functionally, NDH shuttles electrons from NAD(P)H:plastoquinone, via FMN and iron-sulfur (Fe-S) centers, to quinones in the photosynthetic chain and possibly in a chloroplast respiratory chain. The immediate electron acceptor for the enzyme in this species is believed to be plastoquinone. Couples the redox reaction to proton translocation, and thus conserves the redox energy in a proton gradient. In Chaetosphaeridium globosum (Charophycean green alga), this protein is NAD(P)H-quinone oxidoreductase subunit 3, chloroplastic.